The primary structure comprises 110 residues: MSLSEARFHDLVDATQQALEDLFDESGLDLDMENSAGVLTVKFEGGAQLIFSRQEPLRQLWLADRSGGFHFDYDEDSGKWVCEKSEELLGEMLERIVWERAGEKLDFDEI.

This sequence belongs to the frataxin family.

Its function is as follows. Involved in iron-sulfur (Fe-S) cluster assembly. May act as a regulator of Fe-S biogenesis. This chain is Iron-sulfur cluster assembly protein CyaY, found in Pseudomonas putida (strain ATCC 700007 / DSM 6899 / JCM 31910 / BCRC 17059 / LMG 24140 / F1).